The chain runs to 361 residues: Gibberellin 20 oxidase 1-D (361 aa).

One can recognise a Fe2OG dioxygenase domain in the interval 199–299 (GNDSIMRLNY…RKSLAFFLCP (101 aa)). Fe cation-binding residues include histidine 224, aspartate 226, and histidine 280. Residue arginine 290 is part of the active site.

It belongs to the iron/ascorbate-dependent oxidoreductase family. GA20OX subfamily. Fe cation serves as cofactor. Requires L-ascorbate as cofactor. In terms of tissue distribution, expressed in nodes and the ear of the elongating stem.

The catalysed reaction is gibberellin A12 + 2 2-oxoglutarate + 3 O2 + H(+) = gibberellin A9 + 2 succinate + 3 CO2 + 2 H2O. It catalyses the reaction gibberellin A53 + 2 2-oxoglutarate + 3 O2 + H(+) = gibberellin A20 + 2 succinate + 3 CO2 + 2 H2O. Functionally, key oxidase enzyme in the biosynthesis of gibberellin that catalyzes the conversion of GA12 and GA53 to GA9 and GA20 respectively, via a three-step oxidation at C-20 of the GA skeleton. The protein is Gibberellin 20 oxidase 1-D (GA20ox1D) of Triticum aestivum (Wheat).